Reading from the N-terminus, the 84-residue chain is UPF0386 protein NGR_c10980 (84 aa).

It belongs to the UPF0386 family.

This Sinorhizobium fredii (strain NBRC 101917 / NGR234) protein is UPF0386 protein NGR_c10980.